We begin with the raw amino-acid sequence, 428 residues long: 3-phosphoshikimate 1-carboxyvinyltransferase (428 aa).

3-phosphoshikimate contacts are provided by Lys20, Ser21, and Arg25. Residue Lys20 participates in phosphoenolpyruvate binding. Phosphoenolpyruvate-binding residues include Gly92 and Arg120. The 3-phosphoshikimate site is built by Ser166, Gln168, Asp314, and Lys341. Residue Gln168 coordinates phosphoenolpyruvate. The Proton acceptor role is filled by Asp314. Phosphoenolpyruvate-binding residues include Arg345 and Arg387.

Belongs to the EPSP synthase family. As to quaternary structure, monomer.

The protein resides in the cytoplasm. The catalysed reaction is 3-phosphoshikimate + phosphoenolpyruvate = 5-O-(1-carboxyvinyl)-3-phosphoshikimate + phosphate. It functions in the pathway metabolic intermediate biosynthesis; chorismate biosynthesis; chorismate from D-erythrose 4-phosphate and phosphoenolpyruvate: step 6/7. Catalyzes the transfer of the enolpyruvyl moiety of phosphoenolpyruvate (PEP) to the 5-hydroxyl of shikimate-3-phosphate (S3P) to produce enolpyruvyl shikimate-3-phosphate and inorganic phosphate. The chain is 3-phosphoshikimate 1-carboxyvinyltransferase from Listeria innocua serovar 6a (strain ATCC BAA-680 / CLIP 11262).